Here is a 224-residue protein sequence, read N- to C-terminus: PKHD-type hydroxylase Shewana3_0717 (224 aa).

The 99-residue stretch at 78–176 (QFYPPLFNRY…RTAAFMWLQS (99 aa)) folds into the Fe2OG dioxygenase domain. 3 residues coordinate Fe cation: His96, Asp98, and His157. Position 167 (Arg167) interacts with 2-oxoglutarate.

The cofactor is Fe(2+). It depends on L-ascorbate as a cofactor.

The polypeptide is PKHD-type hydroxylase Shewana3_0717 (Shewanella sp. (strain ANA-3)).